Reading from the N-terminus, the 122-residue chain is Large ribosomal subunit protein uL29A (122 aa).

Residues 10-69 (QLGIKQIEERAAEIKADLAALRQKKNSGDVGANDIKTAKKNLARALTVRREKILEELVEA) are a coiled coil.

It belongs to the universal ribosomal protein uL29 family. Component of the large ribosomal subunit.

It localises to the cytoplasm. In Encephalitozoon cuniculi (strain GB-M1) (Microsporidian parasite), this protein is Large ribosomal subunit protein uL29A (RPL35A).